Reading from the N-terminus, the 518-residue chain is Lysine 5,6-aminomutase alpha subunit (518 aa).

Residues 184–189, S238, Y263, R268, and N299 contribute to the pyridoxal 5'-phosphate site; that span reads RTTGQS.

Belongs to the KamD family. Heterotetramer of 2 alpha and 2 beta subunits. Adenosylcob(III)alamin serves as cofactor. Pyridoxal 5'-phosphate is required as a cofactor.

The catalysed reaction is (3S)-3,6-diaminohexanoate = (3S,5S)-3,5-diaminohexanoate. The enzyme catalyses D-lysine = (2R,5S)-2,5-diaminohexanoate. Its pathway is amino-acid degradation; L-lysine degradation via acetate pathway. In terms of biological role, catalyzes the migration of the L-beta-lysine and D-lysine epsilon amino group to the delta carbon to produce 3,5-diaminohexanoate and 2,5-diaminohexanoate, respectively. The polypeptide is Lysine 5,6-aminomutase alpha subunit (Fusobacterium nucleatum subsp. nucleatum (strain ATCC 25586 / DSM 15643 / BCRC 10681 / CIP 101130 / JCM 8532 / KCTC 2640 / LMG 13131 / VPI 4355)).